We begin with the raw amino-acid sequence, 115 residues long: Guanylin (115 aa).

Positions 1–23 (MNAWLLSVLCLLGALAVLVEGVT) are cleaved as a signal peptide. Residues 24 to 100 (VQDGDLSFPL…LQRLEAIAQD (77 aa)) constitute a propeptide that is removed on maturation. 3 disulfides stabilise this stretch: Cys69–Cys82, Cys104–Cys112, and Cys107–Cys115.

This sequence belongs to the guanylin family. As to expression, intestine and in low abundance in adrenal gland, kidney, and uterus/oviduct.

It is found in the secreted. Its function is as follows. Endogenous activator of intestinal guanylate cyclase. It stimulates this enzyme through the same receptor binding region as the heat-stable enterotoxins. This is Guanylin (Guca2a) from Rattus norvegicus (Rat).